The following is a 152-amino-acid chain: UPF0178 protein YaiI (152 aa).

Belongs to the UPF0178 family.

This is UPF0178 protein YaiI from Escherichia coli O6:K15:H31 (strain 536 / UPEC).